Consider the following 66-residue polypeptide: MKKDIHPKLVECTVTCSCGNSFKNESQKSEMRIDICNECHPFFTGSERMVDTAGRIDKFKKRYAQN.

Residues Cys-16, Cys-18, Cys-36, and Cys-39 each contribute to the Zn(2+) site.

The protein belongs to the bacterial ribosomal protein bL31 family. Type A subfamily. In terms of assembly, part of the 50S ribosomal subunit. The cofactor is Zn(2+).

In terms of biological role, binds the 23S rRNA. The protein is Large ribosomal subunit protein bL31 of Sulfurimonas denitrificans (strain ATCC 33889 / DSM 1251) (Thiomicrospira denitrificans (strain ATCC 33889 / DSM 1251)).